The primary structure comprises 242 residues: Ubiquinone biosynthesis O-methyltransferase (242 aa).

Arg-44, Gly-64, Asp-85, and Met-129 together coordinate S-adenosyl-L-methionine.

This sequence belongs to the methyltransferase superfamily. UbiG/COQ3 family.

It catalyses the reaction a 3-demethylubiquinol + S-adenosyl-L-methionine = a ubiquinol + S-adenosyl-L-homocysteine + H(+). The enzyme catalyses a 3-(all-trans-polyprenyl)benzene-1,2-diol + S-adenosyl-L-methionine = a 2-methoxy-6-(all-trans-polyprenyl)phenol + S-adenosyl-L-homocysteine + H(+). Its pathway is cofactor biosynthesis; ubiquinone biosynthesis. Its function is as follows. O-methyltransferase that catalyzes the 2 O-methylation steps in the ubiquinone biosynthetic pathway. The polypeptide is Ubiquinone biosynthesis O-methyltransferase (Salmonella arizonae (strain ATCC BAA-731 / CDC346-86 / RSK2980)).